Reading from the N-terminus, the 274-residue chain is Large ribosomal subunit protein uL2 (274 aa).

The interval 224–274 is disordered; it reads AMNPVDHPHGGGEGRTGEGQVPVSPWNTMTKGYRTRSNKRTQTFIVSRRKK. Residues 229–239 are compositionally biased toward basic and acidic residues; sequence DHPHGGGEGRT.

It belongs to the universal ribosomal protein uL2 family. As to quaternary structure, part of the 50S ribosomal subunit. Forms a bridge to the 30S subunit in the 70S ribosome.

One of the primary rRNA binding proteins. Required for association of the 30S and 50S subunits to form the 70S ribosome, for tRNA binding and peptide bond formation. It has been suggested to have peptidyltransferase activity; this is somewhat controversial. Makes several contacts with the 16S rRNA in the 70S ribosome. This Methylibium petroleiphilum (strain ATCC BAA-1232 / LMG 22953 / PM1) protein is Large ribosomal subunit protein uL2.